The chain runs to 467 residues: D-hydantoinase (467 aa).

Residues H65, H67, and K156 each contribute to the Zn(2+) site. N6-carboxylysine is present on K156. Y161 contributes to the substrate binding site. Positions 189 and 245 each coordinate Zn(2+). A substrate-binding site is contributed by S294. D321 lines the Zn(2+) pocket. N343 is a substrate binding site.

It belongs to the metallo-dependent hydrolases superfamily. Hydantoinase/dihydropyrimidinase family. In terms of assembly, homotetramer. It depends on Zn(2+) as a cofactor. In terms of processing, carboxylation allows a single lysine to coordinate two zinc ions.

Functionally, catalyzes the stereospecific hydrolysis of the cyclic amide bond of D-hydantoin derivatives. This Streptomyces coelicolor (strain ATCC BAA-471 / A3(2) / M145) protein is D-hydantoinase (hyuA).